A 335-amino-acid chain; its full sequence is Glyoxylate reductase (335 aa).

Residues 159 to 162 (MGRI), 181 to 183 (SRS), and 240 to 242 (TGR) contribute to the NADP(+) site. Residues R242 and E271 contribute to the active site. H290 (proton donor) is an active-site residue. Residue 290–292 (HAA) coordinates NADP(+).

It belongs to the D-isomer specific 2-hydroxyacid dehydrogenase family. GyaR subfamily. Homodimer.

The protein localises to the cytoplasm. It catalyses the reaction glycolate + NAD(+) = glyoxylate + NADH + H(+). The polypeptide is Glyoxylate reductase (Aeropyrum pernix (strain ATCC 700893 / DSM 11879 / JCM 9820 / NBRC 100138 / K1)).